The following is a 603-amino-acid chain: F-box only protein 46 (603 aa).

Positions 20 to 54 are disordered; the sequence is YSQNQPRPPSATLKPPVCPDTSSGTEPDHRPAHLE. Phosphoserine is present on residues serine 21 and serine 67. Disordered stretches follow at residues 111-163, 235-301, 332-359, and 396-442; these read GGSR…PTSS, EAQR…TRAK, EASE…ARDC, and TVSP…GTTD. Phosphothreonine is present on threonine 347. Pro residues predominate over residues 347–356; it reads TPPAPPPPPA. One can recognise an F-box domain in the interval 470 to 522; the sequence is RQYMLLLPEHVLVKIFSFLPTRALAALKCTCHHFKGIIEAFGVRATDSRWSRD.

As to quaternary structure, part of a SCF (SKP1-cullin-F-box) protein ligase complex SCF(FBXO46) composed of CUL1, SKP1, RBX1 and FBXO46. In terms of processing, phosphorylated by ATM in response to DNA damage, promoting ubiquitination and degradation by the SCF(FBXO31) complex. ATM-phosphorylated FBXO46 is ubiquitinated and degradaded by the SCF(FBXO31) complex in response to DNA damage.

The protein operates within protein modification; protein ubiquitination. Functionally, substrate-recognition component of the SCF(FBXO46) protein ligase complex, which mediates the ubiquitination and degradation of target proteins. In absence of stress, the SCF(FBXO46) complex catalyzes ubiquitination and degradation of MTOR-phosphorylated FBXO31. This chain is F-box only protein 46 (Fbxo46), found in Rattus norvegicus (Rat).